The following is a 173-amino-acid chain: Ribosome maturation factor RimM (173 aa).

Residues 96–169 (PDEFYDHQLE…LITIDPPDGL (74 aa)) form the PRC barrel domain.

This sequence belongs to the RimM family. Binds ribosomal protein uS19.

The protein resides in the cytoplasm. Functionally, an accessory protein needed during the final step in the assembly of 30S ribosomal subunit, possibly for assembly of the head region. Essential for efficient processing of 16S rRNA. May be needed both before and after RbfA during the maturation of 16S rRNA. It has affinity for free ribosomal 30S subunits but not for 70S ribosomes. The sequence is that of Ribosome maturation factor RimM from Mycolicibacterium gilvum (strain PYR-GCK) (Mycobacterium gilvum (strain PYR-GCK)).